A 264-amino-acid polypeptide reads, in one-letter code: Probable metallo-hydrolase YflN (264 aa).

Residues histidine 80, histidine 82, aspartate 84, histidine 85, histidine 169, aspartate 188, and histidine 241 each coordinate Zn(2+).

It belongs to the metallo-beta-lactamase superfamily. It depends on Zn(2+) as a cofactor.

The chain is Probable metallo-hydrolase YflN (yflN) from Bacillus subtilis (strain 168).